The chain runs to 493 residues: Succinate-semialdehyde dehydrogenase [NADP(+)] 2 (493 aa).

Position 242–247 (242–247 (GSTNVG)) interacts with NAD(+). Residue glutamate 264 is part of the active site. Cysteine 298 functions as the Nucleophile in the catalytic mechanism.

This sequence belongs to the aldehyde dehydrogenase family. As to quaternary structure, homotetramer.

It localises to the cytoplasm. The enzyme catalyses succinate semialdehyde + NAD(+) + H2O = succinate + NADH + 2 H(+). The catalysed reaction is succinate semialdehyde + NADP(+) + H2O = succinate + NADPH + 2 H(+). Its pathway is amino-acid degradation; 4-aminobutanoate degradation. In terms of biological role, catalyzes the oxidation of succinate semialdehyde to succinate. Can utilize both NAD(+) or NADP(+) as a coenzyme. Functions in the GABA shunt, which allows to bypass 2 reactions in the TCA cycle by removing alpha-ketoglutarate from the cycle and feeding succinate and NADH back into the cycle. This is Succinate-semialdehyde dehydrogenase [NADP(+)] 2 (ssd2) from Schizosaccharomyces pombe (strain 972 / ATCC 24843) (Fission yeast).